The chain runs to 572 residues: Oxygen-dependent choline dehydrogenase (572 aa).

7-36 contacts FAD; sequence DYIIIGAGSAGNVLATRLTEDRDVTVLLLE. The Proton acceptor role is filled by His-474.

It belongs to the GMC oxidoreductase family. The cofactor is FAD.

It catalyses the reaction choline + A = betaine aldehyde + AH2. The catalysed reaction is betaine aldehyde + NAD(+) + H2O = glycine betaine + NADH + 2 H(+). Its pathway is amine and polyamine biosynthesis; betaine biosynthesis via choline pathway; betaine aldehyde from choline (cytochrome c reductase route): step 1/1. Involved in the biosynthesis of the osmoprotectant glycine betaine. Catalyzes the oxidation of choline to betaine aldehyde and betaine aldehyde to glycine betaine at the same rate. The protein is Oxygen-dependent choline dehydrogenase of Paraburkholderia phymatum (strain DSM 17167 / CIP 108236 / LMG 21445 / STM815) (Burkholderia phymatum).